Here is a 407-residue protein sequence, read N- to C-terminus: Probable tRNA sulfurtransferase (407 aa).

A THUMP domain is found at 61–165; that stretch reads NEITYRLSKI…LDAIYMYEEV (105 aa). Residues 183 to 184, 208 to 209, R265, G287, and Q296 each bind ATP; these read ML and HF.

Belongs to the ThiI family.

The protein localises to the cytoplasm. It catalyses the reaction [ThiI sulfur-carrier protein]-S-sulfanyl-L-cysteine + a uridine in tRNA + 2 reduced [2Fe-2S]-[ferredoxin] + ATP + H(+) = [ThiI sulfur-carrier protein]-L-cysteine + a 4-thiouridine in tRNA + 2 oxidized [2Fe-2S]-[ferredoxin] + AMP + diphosphate. The catalysed reaction is [ThiS sulfur-carrier protein]-C-terminal Gly-Gly-AMP + S-sulfanyl-L-cysteinyl-[cysteine desulfurase] + AH2 = [ThiS sulfur-carrier protein]-C-terminal-Gly-aminoethanethioate + L-cysteinyl-[cysteine desulfurase] + A + AMP + 2 H(+). It participates in cofactor biosynthesis; thiamine diphosphate biosynthesis. In terms of biological role, catalyzes the ATP-dependent transfer of a sulfur to tRNA to produce 4-thiouridine in position 8 of tRNAs, which functions as a near-UV photosensor. Also catalyzes the transfer of sulfur to the sulfur carrier protein ThiS, forming ThiS-thiocarboxylate. This is a step in the synthesis of thiazole, in the thiamine biosynthesis pathway. The sulfur is donated as persulfide by IscS. This Staphylococcus aureus (strain MSSA476) protein is Probable tRNA sulfurtransferase.